Consider the following 152-residue polypeptide: Deoxyuridine 5'-triphosphate nucleotidohydrolase (152 aa).

Substrate is bound by residues 72–74 (RSG), asparagine 85, and 89–91 (TID).

The protein belongs to the dUTPase family. Mg(2+) serves as cofactor.

The enzyme catalyses dUTP + H2O = dUMP + diphosphate + H(+). It functions in the pathway pyrimidine metabolism; dUMP biosynthesis; dUMP from dCTP (dUTP route): step 2/2. Its function is as follows. This enzyme is involved in nucleotide metabolism: it produces dUMP, the immediate precursor of thymidine nucleotides and it decreases the intracellular concentration of dUTP so that uracil cannot be incorporated into DNA. This chain is Deoxyuridine 5'-triphosphate nucleotidohydrolase, found in Bradyrhizobium sp. (strain ORS 278).